Reading from the N-terminus, the 175-residue chain is Adenine phosphoribosyltransferase (175 aa).

The protein belongs to the purine/pyrimidine phosphoribosyltransferase family. As to quaternary structure, homodimer.

The protein localises to the cytoplasm. It carries out the reaction AMP + diphosphate = 5-phospho-alpha-D-ribose 1-diphosphate + adenine. The protein operates within purine metabolism; AMP biosynthesis via salvage pathway; AMP from adenine: step 1/1. Its function is as follows. Catalyzes a salvage reaction resulting in the formation of AMP, that is energically less costly than de novo synthesis. This chain is Adenine phosphoribosyltransferase, found in Lactobacillus delbrueckii subsp. bulgaricus (strain ATCC 11842 / DSM 20081 / BCRC 10696 / JCM 1002 / NBRC 13953 / NCIMB 11778 / NCTC 12712 / WDCM 00102 / Lb 14).